The primary structure comprises 292 residues: Protease HtpX (292 aa).

Transmembrane regions (helical) follow at residues 4 to 24 (IILF…ILAV) and 32 to 52 (IYGL…LSLI). H139 lines the Zn(2+) pocket. The active site involves E140. H143 is a Zn(2+) binding site. 2 consecutive transmembrane segments (helical) span residues 150-170 (ITMT…SRII) and 193-213 (FLFF…ASII). Zn(2+) is bound at residue E222.

This sequence belongs to the peptidase M48B family. Requires Zn(2+) as cofactor.

It localises to the cell membrane. This chain is Protease HtpX, found in Buchnera aphidicola subsp. Schizaphis graminum (strain Sg).